Here is a 221-residue protein sequence, read N- to C-terminus: PKHD-type hydroxylase P9211_12561 (221 aa).

Positions 80-174 (KVHGTMFTRS…RIVCVGWIQS (95 aa)) constitute a Fe2OG dioxygenase domain. Fe cation is bound by residues H98, D100, and H155. R165 provides a ligand contact to 2-oxoglutarate.

Fe(2+) serves as cofactor. L-ascorbate is required as a cofactor.

This Prochlorococcus marinus (strain MIT 9211) protein is PKHD-type hydroxylase P9211_12561.